The primary structure comprises 103 residues: Large ribosomal subunit protein bL36m (103 aa).

This sequence belongs to the bacterial ribosomal protein bL36 family. As to quaternary structure, component of the mitochondrial large ribosomal subunit (mt-LSU). Mature mammalian 55S mitochondrial ribosomes consist of a small (28S) and a large (39S) subunit. The 28S small subunit contains a 12S ribosomal RNA (12S mt-rRNA) and 30 different proteins. The 39S large subunit contains a 16S rRNA (16S mt-rRNA), a copy of mitochondrial valine transfer RNA (mt-tRNA(Val)), which plays an integral structural role, and 52 different proteins. bL36m has a zinc binding site.

The protein localises to the mitochondrion. In Homo sapiens (Human), this protein is Large ribosomal subunit protein bL36m (MRPL36).